The sequence spans 196 residues: Purpurin (196 aa).

A signal peptide spans 1 to 21; sequence MKYAQYVFLASIFSAVEYSLA. Cystine bridges form between Cys-24-Cys-182, Cys-90-Cys-196, and Cys-142-Cys-151.

Belongs to the calycin superfamily. Lipocalin family.

The protein localises to the secreted. The protein resides in the extracellular space. It is found in the extracellular matrix. Its subcellular location is the interphotoreceptor matrix. Its function is as follows. May be involved in the transport of retinol between the photoreceptors and the pigmented epithelium. This chain is Purpurin, found in Gallus gallus (Chicken).